We begin with the raw amino-acid sequence, 164 residues long: Choriogonadotropin subunit beta (164 aa).

Positions 1–20 are cleaved as a signal peptide; that stretch reads MEMLQGLLLCLLLSTGGAWA. 6 cysteine pairs are disulfide-bonded: cysteine 29–cysteine 77, cysteine 43–cysteine 92, cysteine 46–cysteine 130, cysteine 54–cysteine 108, cysteine 58–cysteine 110, and cysteine 113–cysteine 120. N-linked (GlcNAc...) asparagine glycosylation is present at asparagine 50. Residues 135–164 form a disordered region; that stretch reads FQDSSSKDPPRNLTSPSQLLEPADPPLVPQ. O-linked (GalNAc...) serine glycosylation is present at serine 140. The N-linked (GlcNAc...) asparagine glycan is linked to asparagine 146. O-linked (GalNAc...) serine glycosylation is present at serine 151.

It belongs to the glycoprotein hormones subunit beta family. As to quaternary structure, heterodimer of a common alpha chain and a unique beta chain which confers biological specificity to thyrotropin, lutropin, follitropin and gonadotropin. In terms of tissue distribution, placenta.

Its subcellular location is the secreted. Stimulates the ovaries to synthesize the steroids that are essential for the maintenance of pregnancy. The protein is Choriogonadotropin subunit beta (CGB) of Callithrix jacchus (White-tufted-ear marmoset).